Reading from the N-terminus, the 203-residue chain is Large ribosomal subunit protein bL25 (203 aa).

The protein belongs to the bacterial ribosomal protein bL25 family. CTC subfamily. In terms of assembly, part of the 50S ribosomal subunit; part of the 5S rRNA/L5/L18/L25 subcomplex. Contacts the 5S rRNA. Binds to the 5S rRNA independently of L5 and L18.

This is one of the proteins that binds to the 5S RNA in the ribosome where it forms part of the central protuberance. The protein is Large ribosomal subunit protein bL25 of Chlorobium phaeovibrioides (strain DSM 265 / 1930) (Prosthecochloris vibrioformis (strain DSM 265)).